A 219-amino-acid chain; its full sequence is Elongation factor Ts, chloroplastic (219 aa).

It belongs to the EF-Ts family.

It is found in the plastid. Its subcellular location is the chloroplast. Functionally, associates with the EF-Tu.GDP complex and induces the exchange of GDP to GTP. It remains bound to the aminoacyl-tRNA.EF-Tu.GTP complex up to the GTP hydrolysis stage on the ribosome. The sequence is that of Elongation factor Ts, chloroplastic (tsf) from Rhodomonas salina (Cryptomonas salina).